We begin with the raw amino-acid sequence, 245 residues long: Ribonuclease PH (245 aa).

Residues arginine 86 and 124–126 each bind phosphate; that span reads GTR.

The protein belongs to the RNase PH family. As to quaternary structure, homohexameric ring arranged as a trimer of dimers.

It carries out the reaction tRNA(n+1) + phosphate = tRNA(n) + a ribonucleoside 5'-diphosphate. Phosphorolytic 3'-5' exoribonuclease that plays an important role in tRNA 3'-end maturation. Removes nucleotide residues following the 3'-CCA terminus of tRNAs; can also add nucleotides to the ends of RNA molecules by using nucleoside diphosphates as substrates, but this may not be physiologically important. Probably plays a role in initiation of 16S rRNA degradation (leading to ribosome degradation) during starvation. In Bacillus anthracis (strain A0248), this protein is Ribonuclease PH.